We begin with the raw amino-acid sequence, 219 residues long: uncharacterized protein (219 aa).

S23 is modified (phosphoserine). A Glycyl lysine isopeptide (Lys-Gly) (interchain with G-Cter in SUMO) cross-link involves residue K137.

The protein resides in the cytoplasm. This is an uncharacterized protein from Saccharomyces cerevisiae (strain ATCC 204508 / S288c) (Baker's yeast).